The chain runs to 230 residues: ATP phosphoribosyltransferase (230 aa).

The protein belongs to the ATP phosphoribosyltransferase family. Short subfamily. In terms of assembly, heteromultimer composed of HisG and HisZ subunits.

Its subcellular location is the cytoplasm. The enzyme catalyses 1-(5-phospho-beta-D-ribosyl)-ATP + diphosphate = 5-phospho-alpha-D-ribose 1-diphosphate + ATP. It participates in amino-acid biosynthesis; L-histidine biosynthesis; L-histidine from 5-phospho-alpha-D-ribose 1-diphosphate: step 1/9. Functionally, catalyzes the condensation of ATP and 5-phosphoribose 1-diphosphate to form N'-(5'-phosphoribosyl)-ATP (PR-ATP). Has a crucial role in the pathway because the rate of histidine biosynthesis seems to be controlled primarily by regulation of HisG enzymatic activity. This is ATP phosphoribosyltransferase from Agrobacterium fabrum (strain C58 / ATCC 33970) (Agrobacterium tumefaciens (strain C58)).